Consider the following 310-residue polypeptide: M1-specific T cell receptor beta chain (310 aa).

The signal sequence occupies residues methionine 1 to glycine 21. The t cell receptor beta variable 19 stretch occupies residues glycine 22–isoleucine 114. Residues glutamate 34–threonine 131 enclose the Ig-like V-type domain. Asparagine 37 carries an N-linked (GlcNAc...) asparagine glycan. The cysteines at positions 42 and 110 are disulfide-linked. Residues leucine 46 to alanine 50 form a CDR1 region. An a peptide antigen-binding site is contributed by aspartate 49. Residues serine 68 to aspartate 73 are CDR2. The interval cysteine 110–phenylalanine 122 is CDR3. The tract at residues serine 117 to threonine 131 is t cell receptor beta joining 2-7. A t cell receptor beta constant 2 region spans residues aspartate 133–glycine 310. Positions proline 140 to threonine 249 constitute an Ig-like C1-type domain. A disulfide bond links cysteine 162 and cysteine 227. Asparagine 201 is a glycosylation site (N-linked (GlcNAc...) asparagine). The interval cysteine 262–alanine 276 is connecting peptide. A helical membrane pass occupies residues threonine 277–leucine 299. Residues methionine 300–glycine 310 are Cytoplasmic-facing.

Disulfide-linked heterodimer with TRAV27*01J42*01C*01 alpha chain. The TR primarily interacts via its CDR3-beta domain with M/matrix protein 1-derived peptide (GILGFVFTL) displayed by HLA-A*02.01 in a 'peg-notch' recognition mode. The alpha-beta TR associates with the transmembrane signaling CD3 coreceptor proteins to form the TR-CD3 (TCR). The assembly of alpha-beta TR heterodimers with CD3 occurs in the endoplasmic reticulum where a single alpha-beta TR heterodimer associates with one CD3D-CD3E heterodimer, one CD3G-CD3E heterodimer and one CD247 homodimer forming a stable octameric structure. CD3D-CD3E and CD3G-CD3E heterodimers preferentially associate with TR alpha and TR beta chains (via TM domain), respectively. The association of the CD247 homodimer is the last step of TCR assembly in the endoplasmic reticulum and is required for transport to the cell surface. In terms of tissue distribution, expressed in M/matrix protein 1-specific effector memory CD8-positive T cells readily detectable in the peripheral blood, secondary lymphoid organs and lung (primary site of infection) of IAV infected individuals.

It localises to the cell membrane. The beta chain of TRAV27*01J42*01C*01/TRBV19*01J2S7*01C*02 alpha-beta T cell receptor (TR) clonotype that is specific for HLA-A*02:01-restricted M/matrix protein 1 immunodominant epitope GILGFVFTL of influenza A virus (IAV). Classified as a public TCR clonotype, it is preferentially selected in effector memory CD8-positive T cells among multiple HLA-A*02:01 carriers/individuals and confers long-lived immunity against IAV infection. Can cross-recognize sporadically emerging IAV variants by molecular mimicry, inducing immunity toward different influenza strains. Antigen recognition initiates TR-CD3 clustering on the cell surface and intracellular activation of LCK that phosphorylates the ITAM motifs of CD3G, CD3D, CD3E and CD247 enabling the recruitment of ZAP70. In turn, ZAP70 phosphorylates LAT, which recruits numerous signaling molecules to form the LAT signalosome. The LAT signalosome propagates signal branching to three major signaling pathways, the calcium, the mitogen-activated protein kinase (MAPK) kinase and the nuclear factor NF-kappa-B (NF-kB) pathways, leading to the mobilization of transcription factors that are critical for gene expression and essential for T cell differentiation into effector/memory T cells. In Homo sapiens (Human), this protein is M1-specific T cell receptor beta chain.